Here is a 298-residue protein sequence, read N- to C-terminus: Ornithine carbamoyltransferase (298 aa).

Residues 50–53 (STRT), glutamine 77, arginine 101, and 128–131 (HPCQ) contribute to the carbamoyl phosphate site. L-ornithine contacts are provided by residues asparagine 159, aspartate 216, and 220–221 (SM). Residues 256 to 257 (CL) and arginine 284 contribute to the carbamoyl phosphate site.

This sequence belongs to the aspartate/ornithine carbamoyltransferase superfamily. OTCase family.

It localises to the cytoplasm. It catalyses the reaction carbamoyl phosphate + L-ornithine = L-citrulline + phosphate + H(+). Its pathway is amino-acid biosynthesis; L-arginine biosynthesis; L-arginine from L-ornithine and carbamoyl phosphate: step 1/3. Its function is as follows. Reversibly catalyzes the transfer of the carbamoyl group from carbamoyl phosphate (CP) to the N(epsilon) atom of ornithine (ORN) to produce L-citrulline. The protein is Ornithine carbamoyltransferase of Methylococcus capsulatus (strain ATCC 33009 / NCIMB 11132 / Bath).